The chain runs to 165 residues: Transcription elongation factor A protein-like 1 (165 aa).

The segment at 1 to 101 (MENTRSENEE…EQPPCGVGKH (101 aa)) is disordered. The segment covering 33-60 (CSEEDQSSEDLSSEEQSSEEEFFPEELL) has biased composition (acidic residues).

This sequence belongs to the TFS-II family. TFA subfamily.

The protein localises to the nucleus. May be involved in transcriptional regulation. Modulates various viral and cellular promoters in a promoter context-dependent manner. Does not bind DNA directly. This Mus musculus (Mouse) protein is Transcription elongation factor A protein-like 1.